Here is a 625-residue protein sequence, read N- to C-terminus: Arginine--tRNA ligase (625 aa).

Residues 117 to 127 carry the 'HIGH' region motif; sequence ANPIHPLHIGH.

Belongs to the class-I aminoacyl-tRNA synthetase family.

The protein resides in the cytoplasm. The enzyme catalyses tRNA(Arg) + L-arginine + ATP = L-arginyl-tRNA(Arg) + AMP + diphosphate. This Saccharolobus solfataricus (strain ATCC 35092 / DSM 1617 / JCM 11322 / P2) (Sulfolobus solfataricus) protein is Arginine--tRNA ligase.